Consider the following 491-residue polypeptide: UDP-N-acetylmuramate--L-alanine ligase (491 aa).

An ATP-binding site is contributed by 126–132 (GTHGKTT).

The protein belongs to the MurCDEF family.

The protein resides in the cytoplasm. It carries out the reaction UDP-N-acetyl-alpha-D-muramate + L-alanine + ATP = UDP-N-acetyl-alpha-D-muramoyl-L-alanine + ADP + phosphate + H(+). Its pathway is cell wall biogenesis; peptidoglycan biosynthesis. In terms of biological role, cell wall formation. The polypeptide is UDP-N-acetylmuramate--L-alanine ligase (Shigella flexneri serotype 5b (strain 8401)).